The chain runs to 329 residues: Biotin--protein ligase 2 (329 aa).

Positions 67–251 constitute a BPL/LPL catalytic domain; that stretch reads ISTHRFGRFL…KFENFFDLFM (185 aa). Biotin contacts are provided by residues 84 to 85, glutamine 107, 111 to 113, and lysine 182; these read ST and RGR.

It belongs to the biotin--protein ligase family. Highly expressed in seeds. Expressed in roots, leaves, stems, flowers and siliques.

Its subcellular location is the cytoplasm. Its function is as follows. Seems to have no or limited implication in biotin-dependent carboxylase biotinylation in planta. In Arabidopsis thaliana (Mouse-ear cress), this protein is Biotin--protein ligase 2 (HCS2).